The chain runs to 176 residues: Small ribosomal subunit protein uS5 (176 aa).

The 64-residue stretch at 11-74 folds into the S5 DRBM domain; sequence LSEVLVDVNR…QAAKKRMMKV (64 aa).

Belongs to the universal ribosomal protein uS5 family. As to quaternary structure, part of the 30S ribosomal subunit. Contacts proteins S4 and S8.

Functionally, with S4 and S12 plays an important role in translational accuracy. Its function is as follows. Located at the back of the 30S subunit body where it stabilizes the conformation of the head with respect to the body. The sequence is that of Small ribosomal subunit protein uS5 from Rickettsia africae (strain ESF-5).